The following is a 98-amino-acid chain: Putative transcriptional regulator YdaS (98 aa).

In terms of biological role, when overexpressed, it induces Rac prophage excision, possibly to counteract the lethal toxicity of YdaT. Overexpression of ydaS or ydaST reduces growth and leads to loss of cell viability. May contribute to toxicity and morphological defects. This chain is Putative transcriptional regulator YdaS (ydaS), found in Escherichia coli (strain K12).